The sequence spans 1448 residues: Protein clueless (1448 aa).

Disordered regions lie at residues 1-96, 110-129, and 265-286; these read MALE…HAEK, NANV…ADGD, and RTRP…VSDP. Composition is skewed to low complexity over residues 9-26 and 41-66; these read NSNA…TKAS and NLNP…ADGP. Positions 68–77 are enriched in basic residues; that stretch reads AKKKGKKNRN. The segment covering 78-88 has biased composition (polar residues); the sequence is KSPTEPTTEAV. Position 270 is a phosphoserine (S270). Positions 424 to 666 constitute a Clu domain; the sequence is RAEDAFSSKL…RTFPPDVNFL (243 aa). 3 disordered regions span residues 726 to 773, 958 to 1010, and 1414 to 1448; these read SEKS…SGEA, AVSS…SASD, and GEAE…ATSS. The span at 748 to 769 shows a compositional bias: basic and acidic residues; that stretch reads GAEKPDDKEKKNEEEEKKERST. Residues 966 to 981 show a composition bias toward basic residues; that stretch reads KKRGNGGKHNKHKSSK. A compositionally biased stretch (low complexity) spans 986 to 1007; that stretch reads QQQQQTTGNQNGSSSGSSNSSS. Positions 1419 to 1429 are enriched in basic and acidic residues; the sequence is AVSKDIKEQPE.

This sequence belongs to the CLU family.

The protein resides in the cytoplasm. Functionally, mRNA-binding protein involved in proper cytoplasmic distribution of mitochondria. This Drosophila melanogaster (Fruit fly) protein is Protein clueless.